A 363-amino-acid polypeptide reads, in one-letter code: tRNA/tmRNA (uracil-C(5))-methyltransferase (363 aa).

Residues glutamine 187, tyrosine 215, asparagine 220, glutamate 236, and aspartate 296 each contribute to the S-adenosyl-L-methionine site. Residue cysteine 321 is the Nucleophile of the active site. The active-site Proton acceptor is glutamate 355.

This sequence belongs to the class I-like SAM-binding methyltransferase superfamily. RNA M5U methyltransferase family. TrmA subfamily.

The enzyme catalyses uridine(54) in tRNA + S-adenosyl-L-methionine = 5-methyluridine(54) in tRNA + S-adenosyl-L-homocysteine + H(+). It carries out the reaction uridine(341) in tmRNA + S-adenosyl-L-methionine = 5-methyluridine(341) in tmRNA + S-adenosyl-L-homocysteine + H(+). Dual-specificity methyltransferase that catalyzes the formation of 5-methyluridine at position 54 (m5U54) in all tRNAs, and that of position 341 (m5U341) in tmRNA (transfer-mRNA). The chain is tRNA/tmRNA (uracil-C(5))-methyltransferase from Pseudomonas aeruginosa (strain ATCC 15692 / DSM 22644 / CIP 104116 / JCM 14847 / LMG 12228 / 1C / PRS 101 / PAO1).